The following is a 598-amino-acid chain: NADH-quinone oxidoreductase subunit C/D (598 aa).

The segment at 1-189 (MTDSTTHDRE…DPFELTRQKQ (189 aa)) is NADH dehydrogenase I subunit C. The interval 213–598 (DFMFLNLGPN…IDFVMSDVDR (386 aa)) is NADH dehydrogenase I subunit D.

This sequence in the N-terminal section; belongs to the complex I 30 kDa subunit family. The protein in the C-terminal section; belongs to the complex I 49 kDa subunit family. As to quaternary structure, NDH-1 is composed of 13 different subunits. Subunits NuoB, CD, E, F, and G constitute the peripheral sector of the complex.

The protein localises to the cell inner membrane. It carries out the reaction a quinone + NADH + 5 H(+)(in) = a quinol + NAD(+) + 4 H(+)(out). In terms of biological role, NDH-1 shuttles electrons from NADH, via FMN and iron-sulfur (Fe-S) centers, to quinones in the respiratory chain. The immediate electron acceptor for the enzyme in this species is believed to be ubiquinone. Couples the redox reaction to proton translocation (for every two electrons transferred, four hydrogen ions are translocated across the cytoplasmic membrane), and thus conserves the redox energy in a proton gradient. In Edwardsiella ictaluri (strain 93-146), this protein is NADH-quinone oxidoreductase subunit C/D.